The following is a 402-amino-acid chain: Probable sugar efflux transporter (402 aa).

The next 12 helical transmembrane spans lie at 15–35 (VLIM…PVAM), 51–71 (GLMM…AMLA), 84–104 (LFII…FWIL), 109–129 (MCIA…VMRI), 137–157 (QALG…LPIG), 168–188 (VTFG…IRLL), 209–229 (PLLL…FTAY), 245–265 (NFAT…SLLF), 276–296 (FIVV…FSTE), 297–317 (AIIA…CIGL), 333–353 (VATA…ALFG), and 365–385 (IGYT…TTHL).

The protein belongs to the major facilitator superfamily. SotB (TC 2.A.1.2) family.

The protein localises to the cell inner membrane. Involved in the efflux of sugars. The physiological role may be the reduction of the intracellular concentration of toxic sugars or sugar metabolites. The sequence is that of Probable sugar efflux transporter from Haemophilus influenzae (strain 86-028NP).